The chain runs to 265 residues: ATP synthase subunit a (265 aa).

Helical transmembrane passes span 25–45 (FWAV…LFLW), 88–108 (IAPL…MDLI), 142–162 (DLNT…IYSI), 207–227 (LFGN…IGFW), and 233–253 (FAWA…FMML).

Belongs to the ATPase A chain family. F-type ATPases have 2 components, CF(1) - the catalytic core - and CF(0) - the membrane proton channel. CF(1) has five subunits: alpha(3), beta(3), gamma(1), delta(1), epsilon(1). CF(0) has three main subunits: a(1), b(2) and c(9-12). The alpha and beta chains form an alternating ring which encloses part of the gamma chain. CF(1) is attached to CF(0) by a central stalk formed by the gamma and epsilon chains, while a peripheral stalk is formed by the delta and b chains.

Its subcellular location is the cell inner membrane. Functionally, key component of the proton channel; it plays a direct role in the translocation of protons across the membrane. The protein is ATP synthase subunit a of Idiomarina loihiensis (strain ATCC BAA-735 / DSM 15497 / L2-TR).